Consider the following 436-residue polypeptide: MGQESTAAAAVVPAEFKLVGHKNFVRSNPMSDHFPVHRFHHVEFWCGDATNTSRRFSWGLGMPLVAKSDLSTGNSAHASYLLRSGELSFVFTAPYSPSLAEPSSASIPTFSFSDHRAFTSSHGLAVRAVAIQVDSASSAYSAAVSRGAKPVSPPVVLADCETAIAEVHLYGDTVLRFVSCGSGADGWFLPGFEVVGDGVSCQELDYGIRRLDHAVGNVPKLEPVVDYLKKFTGFHEFAEFTAEDVGTAESGLNSVVLANNNENVLFPLNEPVYGTKRKSQIQTYLDHNEGAGVQHLALITEDIFRTLREMRKRSEVGGFEFMPSPPPTYYRNLKSRAGDVLSDEQIEECEKLGILIDRDDQGTLLQIFTKPVGDRPTLFIEIIQRVGCMMKDEEGKMYQKGGCGGFGKGNFSELFKSIEEYEKMLESKLVTKTAMA.

VOC domains follow at residues 38–194 and 210–370; these read RFHH…GFEV and RLDH…IFTK. The Fe cation site is built by His213, His295, and Glu381.

The protein belongs to the 4HPPD family. Fe cation serves as cofactor.

It is found in the cytoplasm. It catalyses the reaction 3-(4-hydroxyphenyl)pyruvate + O2 = homogentisate + CO2. It functions in the pathway amino-acid degradation; L-phenylalanine degradation; acetoacetate and fumarate from L-phenylalanine: step 3/6. Its pathway is cofactor biosynthesis; prenylquinone biosynthesis. The chain is 4-hydroxyphenylpyruvate dioxygenase from Plectranthus scutellarioides (Coleus).